Reading from the N-terminus, the 274-residue chain is Dermonecrotic toxin SdSicTox-betaIIB1bxiii (274 aa).

Residue histidine 5 is part of the active site. Residues glutamate 25 and aspartate 27 each contribute to the Mg(2+) site. The active-site Nucleophile is the histidine 41. 2 disulfides stabilise this stretch: cysteine 45-cysteine 51 and cysteine 47-cysteine 190. A Mg(2+)-binding site is contributed by aspartate 85.

Belongs to the arthropod phospholipase D family. Class II subfamily. Mg(2+) is required as a cofactor. Expressed by the venom gland.

Its subcellular location is the secreted. The catalysed reaction is an N-(acyl)-sphingosylphosphocholine = an N-(acyl)-sphingosyl-1,3-cyclic phosphate + choline. It carries out the reaction an N-(acyl)-sphingosylphosphoethanolamine = an N-(acyl)-sphingosyl-1,3-cyclic phosphate + ethanolamine. It catalyses the reaction a 1-acyl-sn-glycero-3-phosphocholine = a 1-acyl-sn-glycero-2,3-cyclic phosphate + choline. The enzyme catalyses a 1-acyl-sn-glycero-3-phosphoethanolamine = a 1-acyl-sn-glycero-2,3-cyclic phosphate + ethanolamine. Functionally, dermonecrotic toxins cleave the phosphodiester linkage between the phosphate and headgroup of certain phospholipids (sphingolipid and lysolipid substrates), forming an alcohol (often choline) and a cyclic phosphate. This toxin acts on sphingomyelin (SM). It may also act on ceramide phosphoethanolamine (CPE), lysophosphatidylcholine (LPC) and lysophosphatidylethanolamine (LPE), but not on lysophosphatidylserine (LPS), and lysophosphatidylglycerol (LPG). It acts by transphosphatidylation, releasing exclusively cyclic phosphate products as second products. Induces dermonecrosis, hemolysis, increased vascular permeability, edema, inflammatory response, and platelet aggregation. This chain is Dermonecrotic toxin SdSicTox-betaIIB1bxiii, found in Sicarius cf. damarensis (strain GJB-2008) (Six-eyed sand spider).